A 709-amino-acid polypeptide reads, in one-letter code: Phosphoribosylformylglycinamidine synthase subunit PurL (709 aa).

The active site involves His-36. ATP-binding residues include Tyr-39 and Lys-80. Residue Glu-82 participates in Mg(2+) binding. Residues 83–86 (SHNH) and Arg-105 contribute to the substrate site. The active-site Proton acceptor is His-84. Asp-106 contacts Mg(2+). Residue Gln-226 participates in substrate binding. Asp-252 serves as a coordination point for Mg(2+). 294–296 (ETQ) lines the substrate pocket. 2 residues coordinate ATP: Asp-470 and Gly-507. Ser-510 serves as a coordination point for substrate.

It belongs to the FGAMS family. Monomer. Part of the FGAM synthase complex composed of 1 PurL, 1 PurQ and 2 PurS subunits.

Its subcellular location is the cytoplasm. The enzyme catalyses N(2)-formyl-N(1)-(5-phospho-beta-D-ribosyl)glycinamide + L-glutamine + ATP + H2O = 2-formamido-N(1)-(5-O-phospho-beta-D-ribosyl)acetamidine + L-glutamate + ADP + phosphate + H(+). The protein operates within purine metabolism; IMP biosynthesis via de novo pathway; 5-amino-1-(5-phospho-D-ribosyl)imidazole from N(2)-formyl-N(1)-(5-phospho-D-ribosyl)glycinamide: step 1/2. In terms of biological role, part of the phosphoribosylformylglycinamidine synthase complex involved in the purines biosynthetic pathway. Catalyzes the ATP-dependent conversion of formylglycinamide ribonucleotide (FGAR) and glutamine to yield formylglycinamidine ribonucleotide (FGAM) and glutamate. The FGAM synthase complex is composed of three subunits. PurQ produces an ammonia molecule by converting glutamine to glutamate. PurL transfers the ammonia molecule to FGAR to form FGAM in an ATP-dependent manner. PurS interacts with PurQ and PurL and is thought to assist in the transfer of the ammonia molecule from PurQ to PurL. The chain is Phosphoribosylformylglycinamidine synthase subunit PurL from Saccharolobus islandicus (strain M.16.4 / Kamchatka #3) (Sulfolobus islandicus).